Reading from the N-terminus, the 1514-residue chain is Neurexin-1 (1514 aa).

An N-terminal signal peptide occupies residues 1 to 30; the sequence is MGTALVQRGGCCLLCLSLLLLGCWAELGSG. In terms of domain architecture, Laminin G-like 1 spans 31-217; that stretch reads LEFPGAEGQW…PPNSGGGSPC (187 aa). Topologically, residues 31 to 1438 are extracellular; that stretch reads LEFPGAEGQW…EVIRESSSTT (1408 aa). 2 N-linked (GlcNAc...) asparagine glycosylation sites follow: Asn125 and Asn190. The interval 197 to 221 is disordered; that stretch reads VDGGEVKLDDEPPNSGGGSPCEAGE. The region spanning 219–256 is the EGF-like 1 domain; sequence AGEEGEGGVCLNGGVCSVVDDQAVCDCSRTGFRGKDCS. Cystine bridges form between Cys228/Cys243 and Cys245/Cys255. Laminin G-like domains lie at 283 to 480 and 487 to 679; these read IATF…AFKC and DPIT…KPSC. Ca(2+)-binding residues include Asp329, Leu346, and Met414. 5 cysteine pairs are disulfide-bonded: Cys444–Cys480, Cys650–Cys679, Cys687–Cys698, Cys692–Cys707, and Cys709–Cys719. In terms of domain architecture, EGF-like 2 spans 683-720; that stretch reads TAKPCLSNPCKNNGMCRDGWNRYVCDCSGTGYLGRSCE. Laminin G-like domains are found at residues 725–898 and 912–1087; these read VLSY…IDYC and DPVT…ERGC. Asp772 and Leu789 together coordinate Ca(2+). An N-linked (GlcNAc...) asparagine glycan is attached at Asn797. A Ca(2+)-binding site is contributed by Arg848. 5 disulfides stabilise this stretch: Cys890-Cys898, Cys1059-Cys1087, Cys1094-Cys1105, Cys1099-Cys1114, and Cys1116-Cys1126. The EGF-like 3 domain occupies 1090–1127; it reads PSTTCQEDSCSNQGVCLQQWDGFSCDCSMTSFSGPLCN. One can recognise a Laminin G-like 6 domain in the interval 1133–1331; the sequence is YIFSKGGGQI…DANIAIVGNV (199 aa). 2 residues coordinate Ca(2+): Asp1183 and Val1200. Asn1230 carries N-linked (GlcNAc...) asparagine glycosylation. Residues Ile1282 and Asn1284 each coordinate Ca(2+). The O-linked (Xyl...) (heparan sulfate) serine glycan is linked to Ser1392. The disordered stretch occupies residues 1396–1427; sequence PSDDEDIDPCEPSSGGLANPTRVGGREPYPGS. A helical membrane pass occupies residues 1439-1459; the sequence is GMVVGIVAAAALCILILLYAM. Over 1460–1514 the chain is Cytoplasmic; the sequence is YKYRNRDEGSYHVDESRNYISNSAQSNGAVVKEKQPSSAKSANKNKKNKDKEYYV. Positions 1481 to 1507 are interaction with CASK; sequence NSAQSNGAVVKEKQPSSAKSANKNKKN. The interval 1481-1514 is disordered; the sequence is NSAQSNGAVVKEKQPSSAKSANKNKKNKDKEYYV.

The protein belongs to the neurexin family. As to quaternary structure, interacts (via laminin G-like domain 2 and/or laminin G-like domain 6) with NLGN1 forming a heterotetramer, where one NLGN1 dimer interacts with one NRXN1 dimer. Also interacts (via laminin G-like domain 2 and/or laminin G-like domain 6) with NLGN2, NLGN3 and NLGN4L; interactions with NLGN1, NLGN2, NLGN3 and NLGN4L are calcium-dependent. Interacts (via cytoplasmic C-terminal region) with CASK (via the PDZ, SH3 and guanylate kinase-like domains). Interacts (via cytoplasmic C-terminus) with CASKIN1 and APBA1. Interacts (via laminin G-like domain 2) with NXPH1 and NXPH3. Alpha-type isoforms (neurexin-1-alpha) interact (via laminin G-like domain 2 and/or laminin G-like domain 6) with DAG1 (via alpha-dystroglycan chain). Interacts with LRRTM1, LRRTM2, LRRTM3 and LRRTM4. Interacts with SYT13 and SYTL1. Interacts with CBLN1, CBLN2 and, less avidly, with CBLN4. Interacts with CLSTN3. In terms of processing, O-glycosylated; contains heparan sulfate. Heparan sulfate attachment is required for synapse development by mediating interactions with neuroligins and LRRTM2.

It localises to the presynaptic cell membrane. Cell surface protein involved in cell-cell-interactions, exocytosis of secretory granules and regulation of signal transmission. Function is isoform-specific. Alpha-type isoforms have a long N-terminus with six laminin G-like domains and play an important role in synaptic signal transmission. Alpha-type isoforms play a role in the regulation of calcium channel activity and Ca(2+)-triggered neurotransmitter release at synapses and at neuromuscular junctions. They play an important role in Ca(2+)-triggered exocytosis of secretory granules in pituitary gland. They may affect their functions at synapses and in endocrine cells via their interactions with proteins from the exocytotic machinery. Likewise, alpha-type isoforms play a role in regulating the activity of postsynaptic NMDA receptors, a subtype of glutamate-gated ion channels. Both alpha-type and beta-type isoforms may play a role in the formation or maintenance of synaptic junctions via their interactions (via the extracellular domains) with neuroligin family members, CBLN1 or CBLN2. In vitro, triggers the de novo formation of presynaptic structures. May be involved in specification of excitatory synapses. Alpha-type isoforms were first identified as receptors for alpha-latrotoxin from spider venom. This is Neurexin-1 (Nrxn1) from Mus musculus (Mouse).